Reading from the N-terminus, the 96-residue chain is Large ribosomal subunit protein eL14 (96 aa).

This sequence belongs to the eukaryotic ribosomal protein eL14 family.

The chain is Large ribosomal subunit protein eL14 from Saccharolobus solfataricus (strain ATCC 35092 / DSM 1617 / JCM 11322 / P2) (Sulfolobus solfataricus).